A 1004-amino-acid chain; its full sequence is 26S proteasome non-ATPase regulatory subunit 1 homolog A (1004 aa).

At A2 the chain carries N-acetylalanine. K166 is covalently cross-linked (Glycyl lysine isopeptide (Lys-Gly) (interchain with G-Cter in ubiquitin)). PC repeat units follow at residues 412–447, 452–485, 487–521, 522–555, 557–590, 591–626, 627–659, 661–695, 696–736, and 739–771; these read SATA…GGSP, GALY…EVIQ, GACL…VAGE, AAGI…EKII, GLAL…IIRY, GGMY…DVRR, TAVL…PHVR, GAAL…FVRQ, GALI…DTMS, and GAIL…TAVI. 2 disordered regions span residues 858–905 and 959–1004; these read EQKA…KKAP and VLSL…EYAS. Position 896 is a phosphoserine (S896). The span at 965–987 shows a compositional bias: low complexity; that stretch reads APTSTASPATGTAAAAQGTPASA.

It belongs to the proteasome subunit S1 family. As to quaternary structure, component of the 19S regulatory particle (RP/PA700) base subcomplex of the 26S proteasome. The 26S proteasome is composed of a core protease (CP), known as the 20S proteasome, capped at one or both ends by the 19S regulatory particle (RP/PA700). The RP/PA700 complex is composed of at least 17 different subunits in two subcomplexes, the base and the lid, which form the portions proximal and distal to the 20S proteolytic core, respectively. As to expression, ubiquitous with highest expression in flowers.

Acts as a regulatory subunit of the 26 proteasome which is involved in the ATP-dependent degradation of ubiquitinated proteins. In Arabidopsis thaliana (Mouse-ear cress), this protein is 26S proteasome non-ATPase regulatory subunit 1 homolog A (RPN2A).